We begin with the raw amino-acid sequence, 448 residues long: tRNA modification GTPase MnmE (448 aa).

3 residues coordinate (6S)-5-formyl-5,6,7,8-tetrahydrofolate: R22, E83, and R122. A TrmE-type G domain is found at 219-369 (GVKTVIVGRP…LESEILKTLK (151 aa)). N229 provides a ligand contact to K(+). GTP is bound by residues 229-234 (NVGKSS), 248-254 (SDIAGTT), and 273-276 (DTAG). S233 is a Mg(2+) binding site. 3 residues coordinate K(+): S248, I250, and T253. Position 254 (T254) interacts with Mg(2+). Residue K448 coordinates (6S)-5-formyl-5,6,7,8-tetrahydrofolate.

This sequence belongs to the TRAFAC class TrmE-Era-EngA-EngB-Septin-like GTPase superfamily. TrmE GTPase family. Homodimer. Heterotetramer of two MnmE and two MnmG subunits. It depends on K(+) as a cofactor.

Its subcellular location is the cytoplasm. Exhibits a very high intrinsic GTPase hydrolysis rate. Involved in the addition of a carboxymethylaminomethyl (cmnm) group at the wobble position (U34) of certain tRNAs, forming tRNA-cmnm(5)s(2)U34. In Acholeplasma laidlawii (strain PG-8A), this protein is tRNA modification GTPase MnmE.